A 710-amino-acid polypeptide reads, in one-letter code: mRNA export factor crp79 (710 aa).

RRM domains lie at 19–102 (IYVG…KLTI) and 222–292 (HFKQ…PTTP). A compositionally biased stretch (polar residues) spans 333 to 348 (QWGSVSTTGVSNQQNH). Positions 333–357 (QWGSVSTTGVSNQQNHPAAWNPDNK) are disordered. An RRM 3 domain is found at 401-474 (EDLFSPFGSI…DRIRRLQAFF (74 aa)). Residues 502–524 (TIRKPIESSTNKISENPTTLSSK) are compositionally biased toward polar residues. The disordered stretch occupies residues 502-544 (TIRKPIESSTNKISENPTTLSSKVENKNEPKTGENKEPSQTNE). The span at 525–538 (VENKNEPKTGENKE) shows a compositional bias: basic and acidic residues.

The protein resides in the cytoplasm. It localises to the nucleus. Binds the poly(A) tail of mRNA. Involved in the export of mRNA from the nucleus to the cytoplasm. The protein is mRNA export factor crp79 (crp79) of Schizosaccharomyces pombe (strain 972 / ATCC 24843) (Fission yeast).